A 340-amino-acid chain; its full sequence is MAINVFYDKDCNIDLIKSKKVAMIGFGSQGHAHAENLRDSGVEVIVGLRKDGSSWKKAEAKGFKVLTVAEATKIADVVMILLPDENQADIYANEIKPNLKDGAYLAFGHGFNIHYKRIIPCSKTNVMMIAPKAPGHTVRSEFVKGGGIPDLIAVHQDASGDTKQVALAYASAIGGGRTGIIETTFKDETETDLFGEQAVLCGGATALVQAGFETLVEAGYEPEMAYFECLHELKLIVDLMYEGGIADMRYSISNTAEYGDYVSGPRVINDESRAAMKQILKEIQNGVFAKDFILEGQAGYPRMNAERAYTKASLLEQTGVKLRNMMPWIASKKIVNQETN.

The KARI N-terminal Rossmann domain maps to 3-183 (INVFYDKDCN…GGGRTGIIET (181 aa)). Residues 26–29 (FGSQ), Arg-49, Ser-54, and 84–87 (DENQ) contribute to the NADP(+) site. His-109 is a catalytic residue. NADP(+) is bound at residue Gly-135. The 146-residue stretch at 184 to 329 (TFKDETETDL…VKLRNMMPWI (146 aa)) folds into the KARI C-terminal knotted domain. Mg(2+) is bound by residues Asp-192, Glu-196, Glu-228, and Glu-232. A substrate-binding site is contributed by Ser-253.

Belongs to the ketol-acid reductoisomerase family. Mg(2+) serves as cofactor.

It carries out the reaction (2R)-2,3-dihydroxy-3-methylbutanoate + NADP(+) = (2S)-2-acetolactate + NADPH + H(+). It catalyses the reaction (2R,3R)-2,3-dihydroxy-3-methylpentanoate + NADP(+) = (S)-2-ethyl-2-hydroxy-3-oxobutanoate + NADPH + H(+). The protein operates within amino-acid biosynthesis; L-isoleucine biosynthesis; L-isoleucine from 2-oxobutanoate: step 2/4. Its pathway is amino-acid biosynthesis; L-valine biosynthesis; L-valine from pyruvate: step 2/4. Its function is as follows. Involved in the biosynthesis of branched-chain amino acids (BCAA). Catalyzes an alkyl-migration followed by a ketol-acid reduction of (S)-2-acetolactate (S2AL) to yield (R)-2,3-dihydroxy-isovalerate. In the isomerase reaction, S2AL is rearranged via a Mg-dependent methyl migration to produce 3-hydroxy-3-methyl-2-ketobutyrate (HMKB). In the reductase reaction, this 2-ketoacid undergoes a metal-dependent reduction by NADPH to yield (R)-2,3-dihydroxy-isovalerate. This chain is Ketol-acid reductoisomerase (NADP(+)), found in Aliarcobacter butzleri (strain RM4018) (Arcobacter butzleri).